Consider the following 42-residue polypeptide: MKVKGSLKSHRNRDKNCKVVKRGGKIYIINKVKPRCKARQGS.

It belongs to the bacterial ribosomal protein bL36 family.

In Wolbachia pipientis wMel, this protein is Large ribosomal subunit protein bL36.